The chain runs to 407 residues: Membrane protein MosC (407 aa).

The interval Met1–His24 is disordered. The next 11 membrane-spanning stretches (helical) occupy residues Leu31 to Ala51, Gly69 to Phe89, Ala109 to Phe129, Ala157 to Ile177, Ser186 to Asp206, Leu225 to Trp245, Gln255 to Gly275, Ala290 to Pro310, Leu316 to Glu336, Val347 to Ile367, and Gly377 to Phe397.

Its subcellular location is the cell membrane. Its function is as follows. May be a membrane transport protein that could either transport a precursor for rhizopine biosynthesis into bacteroids or the finished product from the bacteroids. The chain is Membrane protein MosC (mosC) from Rhizobium meliloti (Ensifer meliloti).